The sequence spans 201 residues: Calcium channel flower (201 aa).

3 helical membrane passes run 37–57 (LGIV…LSII), 59–79 (LSVS…VVMA), and 103–120 (PMYF…PPIF).

It belongs to the calcium channel flower family. In terms of assembly, homomultimer. Associates with the dally/ magu complex.

The protein localises to the cell membrane. The protein resides in the cytoplasmic vesicle. It localises to the secretory vesicle. Its subcellular location is the synaptic vesicle membrane. It is found in the presynaptic cell membrane. The protein localises to the endosome. With respect to regulation, channel activity is inhibited by La(3+), which reduces Ca(2+) influx and thus inhibits it's function in promoting activity-dependent bulk endocytosis (ADBE) in response to high stimuli. Functionally, transmembrane protein which mediates synaptic endocytosis, fitness-based cell culling, neuronal culling, morphogen gradient scaling, and calcium transport. Regulates synaptic endocytosis and hence couples exo- with endocytosis. Controls two major modes of synaptic vesicle (SV) endocytosis in the synaptic boutons of neuromuscular junctions (NMJs); Ca(2+) channel-independent Clathrin-mediated endocytosis (CME) in response to mild stimulation, and Ca(2+) channel-dependent activity-dependent bulk endocytosis (ADBE) in response to strong stimulation. Functions in ADBE and subsequent SV reformation from bulk endosomes by initiating Ca(2+) channel-dependent phosphatidylinositol 4,5-bisphosphate (PtdIns(4,5)P2) compartmentalization in synaptic boutons. There it acts at the periactive zone to provide the low Ca(2+) levels required to initiate Calcineurin activation and upregulate PtdIns(4,5)P2. Conversely PtdIns(4,5)P2 enhances fwe Ca(2+) channel-activity, establishing a positive feedback loop that induces PtdIns(4,5)P2 microdomain at the periactive zone. These microdomains trigger bulk membrane invagination (i.e. ADBE) by triggering actin polymerization while also promoting localization of fwe to bulk endosomes, thereby removing the ADBE trigger to reduce endocytosis and prevent excess membrane uptake. PtdIns(4,5)P2 then promotes SV reformation from the bulk endosomes, to coordinate ADBE and subsequent SV reformation. Different combinations of the flower isoforms at the cell membrane are also required for the identification and elimination of suboptimal or supernumerary cells during development, regeneration, and adulthood. Required for the recognition and elimination of unfit cells in the developing wing during cell competition. In the developing pupal retina, mediates the elimination of unwanted postmitotic neurons, including supernumerary photoreceptor neurons that form at the periphery of the retina and are contained within incomplete ommatidia units. Also required for efficient elimination and replacement of old neurons by newly generated neurons during regeneration in the adult brain following mechanical injury. Downstream of the flower fitness fingerprints, cells identified as unwanted or unfit are eliminated via apoptosis through the expression of ahuizotl (azot). However, the cells marked for elimination by the flower isoforms only undergo apoptosis if additional thresholds are met; (1) their neighboring fit/healthy cells express different levels of the fwe isoforms, and (2) the levels of the protective signal SPARC expressed by the loser or unwanted cells are unable to inhibit caspase activation. These additional thresholds for flower-mediated apoptosis, allows useful cells to recover from transient and limited stress before they are unnecessarily eliminated. Functions with dally and magu in a mechanism of scaling, which utilises apoptosis to ensure that the dpp morphogen gradient, which mediates organ growth, remains proportional to the size of the growing wing. In this mechanism, fwe represses dally- and Magu-dependent activity in expanding the gradient, and dally/Magu inhibits fwe-dependent apoptosis to keep cell death rate low. When the levels of these different proteins are optimally regulated the gradient correctly scales with organ growth but when this fails, fwe-mediated apoptosis is activated to trim the developing tissue to match the correct size of the gradient. The protein is Calcium channel flower of Drosophila willistoni (Fruit fly).